Reading from the N-terminus, the 610-residue chain is Aspartate--tRNA(Asp/Asn) ligase (610 aa).

Glu196 serves as a coordination point for L-aspartate. The aspartate stretch occupies residues 220-223 (QIFK). An L-aspartate-binding site is contributed by Arg242. Residues 242-244 (RDE) and Gln251 each bind ATP. L-aspartate is bound at residue His465. Position 499 (Glu499) interacts with ATP. Arg506 is an L-aspartate binding site. 551–554 (GMDR) is a binding site for ATP.

It belongs to the class-II aminoacyl-tRNA synthetase family. Type 1 subfamily. As to quaternary structure, homodimer.

The protein resides in the cytoplasm. The enzyme catalyses tRNA(Asx) + L-aspartate + ATP = L-aspartyl-tRNA(Asx) + AMP + diphosphate. In terms of biological role, aspartyl-tRNA synthetase with relaxed tRNA specificity since it is able to aspartylate not only its cognate tRNA(Asp) but also tRNA(Asn). Reaction proceeds in two steps: L-aspartate is first activated by ATP to form Asp-AMP and then transferred to the acceptor end of tRNA(Asp/Asn). The protein is Aspartate--tRNA(Asp/Asn) ligase of Nitratidesulfovibrio vulgaris (strain ATCC 29579 / DSM 644 / CCUG 34227 / NCIMB 8303 / VKM B-1760 / Hildenborough) (Desulfovibrio vulgaris).